A 302-amino-acid polypeptide reads, in one-letter code: Putative beta-glucosidase 17 (302 aa).

Residues 1–27 form the signal peptide; sequence MMAVAAATRIAVVVVAALAALAPGARG. A beta-D-glucoside contacts are provided by residues glutamine 47, histidine 149, and 194–195; that span reads NE. Catalysis depends on glutamate 195, which acts as the Proton donor. Cysteines 214 and 221 form a disulfide. Asparagine 274 is a glycosylation site (N-linked (GlcNAc...) asparagine).

It belongs to the glycosyl hydrolase 1 family.

It catalyses the reaction Hydrolysis of terminal, non-reducing beta-D-glucosyl residues with release of beta-D-glucose.. This Oryza sativa subsp. japonica (Rice) protein is Putative beta-glucosidase 17 (BGLU17).